Reading from the N-terminus, the 197-residue chain is TLE family member 5 (197 aa).

A CCN domain region spans residues 166 to 197; it reads LSALGSQTHLSKEDKNGHDGDTHQEDDGEKSD. A disordered region spans residues 170–197; that stretch reads GSQTHLSKEDKNGHDGDTHQEDDGEKSD. A compositionally biased stretch (basic and acidic residues) spans 175 to 197; that stretch reads LSKEDKNGHDGDTHQEDDGEKSD. Serine 196 bears the Phosphoserine mark.

The protein belongs to the WD repeat Groucho/TLE family. As to quaternary structure, homooligomer and heterooligomer with other family members. Binds TCF7 and the NF-kappa-B subunit RELA. Interacts with PHF12. Interacts (via Q domain) with SIX3. Interacts with SIX6. Post-translationally, ubiquitinated by XIAP/BIRC4. Ubiquitously expressed in developing embryos by midgestation, a wide expression is conserved in adult. In mouse, abundantly expressed in muscle, heart and brain.

The protein localises to the nucleus. In terms of biological role, transcriptional corepressor. Acts as a dominant repressor towards other family members. Inhibits NF-kappa-B-regulated gene expression. May be required for the initiation and maintenance of the differentiated state. Essential for the transcriptional repressor activity of SIX3 during retina and lens development. The polypeptide is TLE family member 5 (Mus musculus (Mouse)).